The primary structure comprises 163 residues: MSGLIQAAKSLLLLEFVDAFFLAMRQFFSPKPTINYPYEKGFVSHRFRGEHALRRYPNGEERCIACKLCEAICPAQAITIEAGPRRNDGTRRTVRYDIDMVKCIYCGFCQEACPVEAIVEGPNFEFATEMREELYYDKEKLLLNGDRWEREIARNILMDAPYR.

4Fe-4S ferredoxin-type domains are found at residues leucine 53 to glycine 83 and valine 94 to asparagine 123. Residues cysteine 63, cysteine 66, cysteine 69, cysteine 73, cysteine 103, cysteine 106, cysteine 109, and cysteine 113 each coordinate [4Fe-4S] cluster.

The protein belongs to the complex I 23 kDa subunit family. NDH-1 is composed of 14 different subunits. Subunits NuoA, H, J, K, L, M, N constitute the membrane sector of the complex. It depends on [4Fe-4S] cluster as a cofactor.

The protein resides in the cell inner membrane. The enzyme catalyses a quinone + NADH + 5 H(+)(in) = a quinol + NAD(+) + 4 H(+)(out). NDH-1 shuttles electrons from NADH, via FMN and iron-sulfur (Fe-S) centers, to quinones in the respiratory chain. The immediate electron acceptor for the enzyme in this species is believed to be ubiquinone. Couples the redox reaction to proton translocation (for every two electrons transferred, four hydrogen ions are translocated across the cytoplasmic membrane), and thus conserves the redox energy in a proton gradient. The protein is NADH-quinone oxidoreductase subunit I of Bartonella bacilliformis (strain ATCC 35685 / KC583 / Herrer 020/F12,63).